The following is a 194-amino-acid chain: MSQYTIPHVIERTPAGERSFDIFSRLLNERIVFLGTEIDDGVANVVMAQLLHLQADSSDQEIGLYINSPGGSTTAMLAIYDTMQFLRPTIATYCMGQAASAAAVLLAAGTKGHRHVLAHSRTLLHQPSTQGNGTISDLALQAAEIMRVRSQTEAILSKHTGQTVERLRRDTDRDRIFTAEEAIEYGLADTLVAA.

Serine 100 functions as the Nucleophile in the catalytic mechanism. The active site involves histidine 125.

Belongs to the peptidase S14 family. As to quaternary structure, fourteen ClpP subunits assemble into 2 heptameric rings which stack back to back to give a disk-like structure with a central cavity, resembling the structure of eukaryotic proteasomes.

The protein resides in the cytoplasm. The enzyme catalyses Hydrolysis of proteins to small peptides in the presence of ATP and magnesium. alpha-casein is the usual test substrate. In the absence of ATP, only oligopeptides shorter than five residues are hydrolyzed (such as succinyl-Leu-Tyr-|-NHMec, and Leu-Tyr-Leu-|-Tyr-Trp, in which cleavage of the -Tyr-|-Leu- and -Tyr-|-Trp bonds also occurs).. In terms of biological role, cleaves peptides in various proteins in a process that requires ATP hydrolysis. Has a chymotrypsin-like activity. Plays a major role in the degradation of misfolded proteins. In Rhodococcus jostii (strain RHA1), this protein is ATP-dependent Clp protease proteolytic subunit 4.